The following is a 591-amino-acid chain: Metastasis-associated protein MTA3 (591 aa).

The BAH domain maps to 1–147 (MAANMYRVGD…PSVKTLLADK (147 aa)). The ELM2 domain occupies 148 to 258 (GEIRVGPKYQ…SAISVLVPLG (111 aa)). Residues 265-317 (DEMEEWSASEACLFEEALEKYGKDFNDIRQDFLPWKSLTSIIEYYYMWKTTDR) form the SANT domain. The GATA-type; atypical zinc-finger motif lies at 377-404 (CESCYATQSHQWYSWGPPNMQCRLCATC). The interval 417-456 (PTQSDEEKSPSPTAEDPRARSHMSRQALQGMPVRNTGSPK) is disordered. Residues 421-435 (DEEKSPSPTAEDPRA) are compositionally biased toward basic and acidic residues. 2 positions are modified to phosphoserine: Ser425 and Ser427. Residue Thr452 is modified to Phosphothreonine. Ser516 carries the post-translational modification Phosphoserine.

It belongs to the metastasis-associated protein family. Component of the nucleosome remodeling and deacetylase (NuRD) repressor complex, composed of core proteins MTA1, MTA2, MTA3, RBBP4, RBBP7, HDAC1, HDAC2, MBD2, MBD3, and peripherally associated proteins CDK2AP1, CDK2AP2, GATAD2A, GATAD2B, CHD3, CHD4 and CHD5. The exact stoichiometry of the NuRD complex is unknown, and some subunits such as MBD2 and MBD3, GATAD2A and GATAD2B, and CHD3, CHD4 and CHD5 define mutually exclusive NuRD complexes. Interacts with BCL6. Interacts with NACC2. Interacts with PWWP2B. As to expression, expressed in heart, brain, spleen, lung, liver and kidney.

Its subcellular location is the nucleus. The protein resides in the cytoplasm. Functionally, acts as a component of the histone deacetylase NuRD complex which participates in the remodeling of chromatin. Plays a role in maintenance of the normal epithelial architecture through the repression of SNAI1 transcription in a histone deacetylase-dependent manner, and thus the regulation of E-cadherin levels. Contributes to transcriptional repression by BCL6. The chain is Metastasis-associated protein MTA3 (Mta3) from Mus musculus (Mouse).